A 37-amino-acid polypeptide reads, in one-letter code: Photosystem I reaction center subunit IX (37 aa).

Residues 4–24 (FLSSAPVLLTAMMVFTAGLLI) traverse the membrane as a helical segment.

This sequence belongs to the PsaJ family.

The protein localises to the cellular thylakoid membrane. May help in the organization of the PsaE and PsaF subunits. The chain is Photosystem I reaction center subunit IX from Picosynechococcus sp. (strain ATCC 27264 / PCC 7002 / PR-6) (Agmenellum quadruplicatum).